Consider the following 70-residue polypeptide: Large ribosomal subunit protein bL31 (70 aa).

The Zn(2+) site is built by C16, C18, C37, and C40.

Belongs to the bacterial ribosomal protein bL31 family. Type A subfamily. As to quaternary structure, part of the 50S ribosomal subunit. It depends on Zn(2+) as a cofactor.

Its function is as follows. Binds the 23S rRNA. This chain is Large ribosomal subunit protein bL31, found in Desulfovibrio desulfuricans (strain ATCC 27774 / DSM 6949 / MB).